A 297-amino-acid polypeptide reads, in one-letter code: 4-hydroxy-tetrahydrodipicolinate synthase (297 aa).

A pyruvate-binding site is contributed by threonine 45. Tyrosine 133 functions as the Proton donor/acceptor in the catalytic mechanism. Lysine 161 acts as the Schiff-base intermediate with substrate in catalysis. Pyruvate is bound at residue isoleucine 205.

This sequence belongs to the DapA family. As to quaternary structure, homotetramer; dimer of dimers.

It is found in the cytoplasm. The enzyme catalyses L-aspartate 4-semialdehyde + pyruvate = (2S,4S)-4-hydroxy-2,3,4,5-tetrahydrodipicolinate + H2O + H(+). The protein operates within amino-acid biosynthesis; L-lysine biosynthesis via DAP pathway; (S)-tetrahydrodipicolinate from L-aspartate: step 3/4. Its function is as follows. Catalyzes the condensation of (S)-aspartate-beta-semialdehyde [(S)-ASA] and pyruvate to 4-hydroxy-tetrahydrodipicolinate (HTPA). In Dichelobacter nodosus (strain VCS1703A), this protein is 4-hydroxy-tetrahydrodipicolinate synthase.